The primary structure comprises 309 residues: Taste receptor type 2 member 31 (309 aa).

Residues 1–2 lie on the Extracellular side of the membrane; the sequence is MI. The helical transmembrane segment at 3-23 threads the bilayer; that stretch reads TFLPIIFSILVVVTFVIGNFA. Residues 24–55 lie on the Cytoplasmic side of the membrane; it reads NGFIALVNSTEWVKRQKISFADQILTALAVSR. A helical transmembrane segment spans residues 56 to 76; the sequence is VGLLWVLLLNWYATVLNPAFY. The Extracellular portion of the chain corresponds to 77–100; the sequence is SVEVRTTTYNVWAVTNHFSNWLAT. The chain crosses the membrane as a helical span at residues 101 to 121; it reads SLSIFYLLKIANFSNLIFLHL. The Cytoplasmic segment spans residues 122 to 126; that stretch reads KRRVK. The helical transmembrane segment at 127 to 147 threads the bilayer; it reads NVILVMLLGPLLILACHLFMV. Topologically, residues 148–181 are extracellular; the sequence is NMNEIVRTKEYEENMTWKYILRNAIYHPGMTVTT. A glycan (N-linked (GlcNAc...) asparagine) is linked at N161. Residues 182–202 form a helical membrane-spanning segment; sequence LQNLVPFTLTLISFLLLICSL. Topologically, residues 203–229 are cytoplasmic; it reads CKHLKKMQLHGKGPQDPSTKVHIKALQ. A helical transmembrane segment spans residues 230-250; sequence IVISFLLLCVIYFVSVIISIW. The Extracellular segment spans residues 251-259; the sequence is SFESLGNKP. Residues 260–280 traverse the membrane as a helical segment; that stretch reads VFMFCQAIRFSYPSAHPFIVI. Topologically, residues 281 to 309 are cytoplasmic; that stretch reads WGNKKLKQTFLSVLWNVRYWVKGQKPSSL.

The protein belongs to the G-protein coupled receptor T2R family.

The protein localises to the membrane. Its function is as follows. Receptor that may play a role in the perception of bitterness and is gustducin-linked. May play a role in sensing the chemical composition of the gastrointestinal content. The activity of this receptor may stimulate alpha gustducin, mediate PLC-beta-2 activation and lead to the gating of TRPM5. This chain is Taste receptor type 2 member 31 (TAS2R31), found in Papio hamadryas (Hamadryas baboon).